The sequence spans 238 residues: Cysteine-rich venom protein natrin-2 (238 aa).

Residues Met1–Gly19 form the signal peptide. The SCP domain maps to Val38–Tyr164. Cystine bridges form between Cys75/Cys153, Cys92/Cys165, Cys148/Cys162, Cys184/Cys191, Cys187/Cys196, Cys200/Cys233, Cys209/Cys227, and Cys218/Cys231. Residues Cys200–Cys233 form the ShKT domain.

In terms of tissue distribution, expressed by the venom gland.

The protein resides in the secreted. Functionally, inhibits carbachol-induced muscle contraction and weakly blocks muscle contraction evoked by potassium. This is Cysteine-rich venom protein natrin-2 from Naja atra (Chinese cobra).